Consider the following 367-residue polypeptide: Dihydroorotate dehydrogenase (quinone) (367 aa).

Residues 61-65 and threonine 85 contribute to the FMN site; that span reads AGFDK. Lysine 65 provides a ligand contact to substrate. 110–114 lines the substrate pocket; the sequence is NRMGF. Residues asparagine 138 and asparagine 169 each coordinate FMN. Asparagine 169 serves as a coordination point for substrate. Catalysis depends on serine 172, which acts as the Nucleophile. Asparagine 174 is a binding site for substrate. The FMN site is built by lysine 212 and threonine 240. 241–242 is a substrate binding site; sequence NT. FMN is bound by residues glycine 263, glycine 292, and 313 to 314; that span reads YS.

This sequence belongs to the dihydroorotate dehydrogenase family. Type 2 subfamily. Monomer. FMN is required as a cofactor.

It is found in the cell membrane. It carries out the reaction (S)-dihydroorotate + a quinone = orotate + a quinol. The protein operates within pyrimidine metabolism; UMP biosynthesis via de novo pathway; orotate from (S)-dihydroorotate (quinone route): step 1/1. Its function is as follows. Catalyzes the conversion of dihydroorotate to orotate with quinone as electron acceptor. This is Dihydroorotate dehydrogenase (quinone) from Rhodospirillum rubrum (strain ATCC 11170 / ATH 1.1.1 / DSM 467 / LMG 4362 / NCIMB 8255 / S1).